The chain runs to 75 residues: UPF0270 protein PFL_4336 (75 aa).

Belongs to the UPF0270 family.

This Pseudomonas fluorescens (strain ATCC BAA-477 / NRRL B-23932 / Pf-5) protein is UPF0270 protein PFL_4336.